The sequence spans 125 residues: Glycine cleavage system H protein (125 aa).

The region spanning 22–104 (SYIIGITDFA…YDTGWILKLT (83 aa)) is the Lipoyl-binding domain. Lys63 carries the post-translational modification N6-lipoyllysine.

This sequence belongs to the GcvH family. In terms of assembly, the glycine cleavage system is composed of four proteins: P, T, L and H. (R)-lipoate is required as a cofactor.

Its function is as follows. The glycine cleavage system catalyzes the degradation of glycine. The H protein shuttles the methylamine group of glycine from the P protein to the T protein. Is also involved in protein lipoylation via its role as an octanoyl/lipoyl carrier protein intermediate. The sequence is that of Glycine cleavage system H protein from Listeria innocua serovar 6a (strain ATCC BAA-680 / CLIP 11262).